The following is a 274-amino-acid chain: Rhamnulose-1-phosphate aldolase (274 aa).

E117 is an active-site residue. Residues H141, H143, and H212 each contribute to the Zn(2+) site.

It belongs to the aldolase class II family. RhaD subfamily. Homotetramer. It depends on Zn(2+) as a cofactor.

It localises to the cytoplasm. It catalyses the reaction L-rhamnulose 1-phosphate = (S)-lactaldehyde + dihydroxyacetone phosphate. It participates in carbohydrate degradation; L-rhamnose degradation; glycerone phosphate from L-rhamnose: step 3/3. Catalyzes the reversible cleavage of L-rhamnulose-1-phosphate to dihydroxyacetone phosphate (DHAP) and L-lactaldehyde. The protein is Rhamnulose-1-phosphate aldolase of Pectobacterium atrosepticum (strain SCRI 1043 / ATCC BAA-672) (Erwinia carotovora subsp. atroseptica).